A 768-amino-acid chain; its full sequence is Actin filament-associated protein 1-like 1 (768 aa).

Positions 82-145 (DLRDMPEDDG…GKSPEYISSH (64 aa)) are disordered. A phosphoserine mark is found at Ser-94, Ser-98, Ser-104, and Ser-153. Residues 173–211 (GELKSSYNDSDAMSSSYESYDEEEEEGKSPQPRHQWPSE) are disordered. Over residues 177 to 190 (SSYNDSDAMSSSYE) the composition is skewed to low complexity. The 97-residue stretch at 220–316 (ECRICAFLLR…WLKVIREVSK (97 aa)) folds into the PH 1 domain. Ser-329 and Ser-343 each carry phosphoserine. Residues 418-512 (EVPCCGYLNV…WLGLLLVEMG (95 aa)) form the PH 2 domain. Tyr-557 carries the phosphotyrosine modification. The interval 566 to 604 (QDEEPERPTGAQVKRHASSCSEKSHRVDPQVKVKRHASS) is disordered. A compositionally biased stretch (basic and acidic residues) spans 587 to 596 (EKSHRVDPQV). Positions 611-700 (GKNRAEEDAR…VAVKERLQQS (90 aa)) form a coiled coil. The interval 705 to 768 (PALGLSVSSK…KAKEWEMKKT (64 aa)) is disordered. The span at 710–729 (SVSSKPKSGETANKPQNSVP) shows a compositional bias: polar residues. Ser-747 is subject to Phosphoserine. Residues 759 to 768 (KAKEWEMKKT) show a composition bias toward basic and acidic residues.

In terms of assembly, interacts with CTTN. As to expression, expressed in breast, colon and brain. In all 3 tissues, expressed in the microvasculature (at protein level). In addition, in the breast, found in the contractile myoepithelial cell layer which surrounds the breast ducts (at protein level). In the colon, expressed in the mucous membrane and colonic crypts and in the smooth muscle cell layer which provide movement of the colon (at protein level). In the cerebellum, localized around the Purkinje neurons and the granule cells of the granular layer, but not inside cell bodies (at protein level). Outside of the cerebellar cortex, expressed in glial cells (at protein level). Highly expressed away from the cell bodies within the dentate nucleus (at protein level).

Its subcellular location is the cytoplasm. The protein localises to the cell projection. The protein resides in the podosome. It localises to the invadopodium. It is found in the cytoskeleton. Its subcellular location is the stress fiber. Its function is as follows. May be involved in podosome and invadosome formation. This Homo sapiens (Human) protein is Actin filament-associated protein 1-like 1 (AFAP1L1).